Reading from the N-terminus, the 258-residue chain is Regulatory protein RecX (258 aa).

The protein belongs to the RecX family.

The protein resides in the cytoplasm. Functionally, modulates RecA activity. This is Regulatory protein RecX from Streptococcus agalactiae serotype Ia (strain ATCC 27591 / A909 / CDC SS700).